The following is a 1267-amino-acid chain: MQPDFKKIHSFENNLINKRSLKDLMYQAFLNYGIVKSSIIADRVKNLTFHFATQSGVSLSVEDLRVPAKKRELIGLTRNEVETTQKRYEIGSITSVEKFQKTIDIWNNANNFLKDDVLTYFRESDPLNPLYIMAFSGARGNISQVRQLVGMRGLMSNPQGQIIDLPIKSNFREGLTVTEYIISSYGARKGLVDTALRTADSGYLTRRLVDVAQDIIVRESDCGTTEGLWATELASNNFLNLRGRLLAEPIFTQEGNLFAPANTEITETFLQTLKTLKDHSPIKVRSSLTCTSTRSVCQNCYGWHLSHSKLVDLGEAVGIVAAQSIGEPGTQLTMRTFHTGGVFSGDLTRQVRSPMEGKIEYWEGHKASLFRTMHGKMGFRLKEEVNLIIKNSFGTTISFEIPAESLLLVNTDQYVYENEIIAEIQKDTNLILEEEQKEIYSETSGEVFFNALDVKVQADKQGNTYKTNNKAGLIWILQGSFYELPAFSETLLKPGLNLSKNTLLSRTPLYNKYPGWVQIDKSDNGTGICVQNFSVTLTNAFINEKVENSSRLQIKTDNQDFQFQLTTEPNSVLKQGDTIAVLDDNTYRTTTGGIVTYSLENPQASKKRKSVKNLFKGYFYWIPEETFKFSTLDEVRLSFSKNESIVGVGEEIMPNTFSKVGGFFQIKEAEQEVTIKPGELFELTSAESQIFDKSDRFVKPGNFIVPGKIITQQLVYLEFFELNEKQYILARPVQVFEVPKEEDLSLSQSFFPYNSHEHIKLKVIKRVFYKNWEKIISNNGINLLQTFIVFDFKQEQQGLEPRLEFTPSKVPGKSFLKIALYEVIKTFENNRKSSHSSLPTTTRNFVSNKQYVASNTLIGQIETTAGLVNKLAAINPHLNSGNMKEVLILNPSDLKKVFCPNVELLKKVSVGDLVRIGTLLNDNVKSPYSGQILEIFEDHILIRLSQPYLISAGTILHATSNNLVKAGDILATLVYETIKTTDIVQGLPKVEELLEARKVLHNALLAPCPGYAYVRFNKHGESTVQLIGLDNEVQTLALKPGIKTKFNSGDFVEVSSALTDGLISPHTKLETLFSYFKNRYTSFEACKLSFKLLQLFLIGEIQRTYRSQGVDIADKHVELIVKQMTSKVCIEDSGTTTFLPGEVLNFQKMADIALVAENKGEIPPSYVPLLLGITKASLNSDSFISAASFQETTRVLTEAAIEGRKDWLTGLKENVIIGRLIPAGTGFNYLENQERLAREKGEIDATFHREAKPLSENILDLRLVKKE.

Positions 222, 290, 297, and 300 each coordinate Zn(2+).

The protein belongs to the RNA polymerase beta' chain family. RpoC2 subfamily. In terms of assembly, in plastids the minimal PEP RNA polymerase catalytic core is composed of four subunits: alpha, beta, beta', and beta''. When a (nuclear-encoded) sigma factor is associated with the core the holoenzyme is formed, which can initiate transcription. The cofactor is Zn(2+).

It localises to the plastid. It is found in the chloroplast. It catalyses the reaction RNA(n) + a ribonucleoside 5'-triphosphate = RNA(n+1) + diphosphate. Functionally, DNA-dependent RNA polymerase catalyzes the transcription of DNA into RNA using the four ribonucleoside triphosphates as substrates. The sequence is that of DNA-directed RNA polymerase subunit beta'' from Emiliania huxleyi (Coccolithophore).